A 335-amino-acid chain; its full sequence is Holliday junction branch migration complex subunit RuvB (335 aa).

The large ATPase domain (RuvB-L) stretch occupies residues 4-184; that stretch reads VDRIVSANAK…FGIVQRLEFY (181 aa). ATP is bound by residues Ile-23, Arg-24, Gly-65, Lys-68, Thr-69, Thr-70, 131–133, Arg-174, Tyr-184, and Arg-221; that span reads EDY. Thr-69 provides a ligand contact to Mg(2+). The interval 185 to 255 is small ATPAse domain (RuvB-S); sequence SVEDLASIVT…IAQEALKMLD (71 aa). The interval 258–335 is head domain (RuvB-H); the sequence is LAGFDFMDRK…RHFGLEQIEK (78 aa). DNA is bound by residues Arg-294, Arg-313, and Arg-318.

This sequence belongs to the RuvB family. In terms of assembly, homohexamer. Forms an RuvA(8)-RuvB(12)-Holliday junction (HJ) complex. HJ DNA is sandwiched between 2 RuvA tetramers; dsDNA enters through RuvA and exits via RuvB. An RuvB hexamer assembles on each DNA strand where it exits the tetramer. Each RuvB hexamer is contacted by two RuvA subunits (via domain III) on 2 adjacent RuvB subunits; this complex drives branch migration. In the full resolvosome a probable DNA-RuvA(4)-RuvB(12)-RuvC(2) complex forms which resolves the HJ.

It localises to the cytoplasm. The catalysed reaction is ATP + H2O = ADP + phosphate + H(+). The RuvA-RuvB-RuvC complex processes Holliday junction (HJ) DNA during genetic recombination and DNA repair, while the RuvA-RuvB complex plays an important role in the rescue of blocked DNA replication forks via replication fork reversal (RFR). RuvA specifically binds to HJ cruciform DNA, conferring on it an open structure. The RuvB hexamer acts as an ATP-dependent pump, pulling dsDNA into and through the RuvAB complex. RuvB forms 2 homohexamers on either side of HJ DNA bound by 1 or 2 RuvA tetramers; 4 subunits per hexamer contact DNA at a time. Coordinated motions by a converter formed by DNA-disengaged RuvB subunits stimulates ATP hydrolysis and nucleotide exchange. Immobilization of the converter enables RuvB to convert the ATP-contained energy into a lever motion, pulling 2 nucleotides of DNA out of the RuvA tetramer per ATP hydrolyzed, thus driving DNA branch migration. The RuvB motors rotate together with the DNA substrate, which together with the progressing nucleotide cycle form the mechanistic basis for DNA recombination by continuous HJ branch migration. Branch migration allows RuvC to scan DNA until it finds its consensus sequence, where it cleaves and resolves cruciform DNA. The chain is Holliday junction branch migration complex subunit RuvB from Histophilus somni (strain 129Pt) (Haemophilus somnus).